Consider the following 260-residue polypeptide: Zinc import ATP-binding protein ZnuC (260 aa).

Positions 14-229 (LTARNLCADR…PEFARLFGDQ (216 aa)) constitute an ABC transporter domain. 46 to 53 (GPNGAGKS) contacts ATP.

It belongs to the ABC transporter superfamily. Zinc importer (TC 3.A.1.15.5) family. As to quaternary structure, the complex is composed of two ATP-binding proteins (ZnuC), two transmembrane proteins (ZnuB) and a solute-binding protein (ZnuA).

The protein resides in the cell inner membrane. It catalyses the reaction Zn(2+)(out) + ATP(in) + H2O(in) = Zn(2+)(in) + ADP(in) + phosphate(in) + H(+)(in). In terms of biological role, part of the ABC transporter complex ZnuABC involved in zinc import. Responsible for energy coupling to the transport system. The polypeptide is Zinc import ATP-binding protein ZnuC (Magnetococcus marinus (strain ATCC BAA-1437 / JCM 17883 / MC-1)).